A 232-amino-acid polypeptide reads, in one-letter code: RNA chaperone ProQ (232 aa).

The tract at residues 105 to 182 (EAKARVQAQR…REEQHTPVSD (78 aa)) is disordered. The span at 117–136 (QQAKKREAAAAAGEKEDAPR) shows a compositional bias: basic and acidic residues. A compositionally biased stretch (basic residues) spans 137 to 146 (RERKPRPTTP). Residues 147-177 (RRKEGAERKPRAQKPVEKAPKTVKAPREEQH) show a composition bias toward basic and acidic residues.

This sequence belongs to the ProQ family.

The protein localises to the cytoplasm. RNA chaperone with significant RNA binding, RNA strand exchange and RNA duplexing activities. May regulate ProP activity through an RNA-based, post-transcriptional mechanism. The sequence is that of RNA chaperone ProQ from Shigella boydii serotype 18 (strain CDC 3083-94 / BS512).